Reading from the N-terminus, the 352-residue chain is ATP synthase subunit a 2 (352 aa).

Positions methionine 1–alanine 26 are cleaved as a signal peptide. The next 7 helical transmembrane spans lie at valine 112 to serine 132, phenylalanine 172 to isoleucine 192, glycine 195 to isoleucine 215, histidine 232 to glycine 252, leucine 264 to isoleucine 284, isoleucine 289 to valine 309, and alanine 310 to alanine 330.

The protein belongs to the ATPase A chain family. As to quaternary structure, F-type ATPases have 2 components, CF(1) - the catalytic core - and CF(0) - the membrane proton channel. CF(1) has five subunits: alpha(3), beta(3), gamma(1), delta(1), epsilon(1). CF(0) has four main subunits: a, b, b' and c.

The protein localises to the cell inner membrane. Its function is as follows. Key component of the proton channel; it plays a direct role in the translocation of protons across the membrane. This is ATP synthase subunit a 2 from Chlorobaculum tepidum (strain ATCC 49652 / DSM 12025 / NBRC 103806 / TLS) (Chlorobium tepidum).